A 156-amino-acid polypeptide reads, in one-letter code: Male-specific protein scotti (156 aa).

Residues T26–Q48 form a disordered region. The N-linked (GlcNAc...) asparagine glycan is linked to N137.

It belongs to the male-specific scotti family.

In terms of biological role, post-meiotically transcribed gene that has a role in late spermiogenesis; required for actin cone progression during spermatid individualization. This is Male-specific protein scotti from Drosophila erecta (Fruit fly).